The sequence spans 342 residues: Heat-inducible transcription repressor HrcA (342 aa).

It belongs to the HrcA family.

Functionally, negative regulator of class I heat shock genes (grpE-dnaK-dnaJ and groELS operons). Prevents heat-shock induction of these operons. The sequence is that of Heat-inducible transcription repressor HrcA from Corynebacterium efficiens (strain DSM 44549 / YS-314 / AJ 12310 / JCM 11189 / NBRC 100395).